The primary structure comprises 118 residues: Hydrogenase maturation factor HypA (118 aa).

H2 serves as a coordination point for Ni(2+). Residues C73, C76, C89, and C92 each coordinate Zn(2+).

The protein belongs to the HypA/HybF family.

Involved in the maturation of [NiFe] hydrogenases. Required for nickel insertion into the metal center of the hydrogenase. The chain is Hydrogenase maturation factor HypA from Shewanella sp. (strain MR-7).